The primary structure comprises 214 residues: Adenylate kinase (214 aa).

Position 10-15 (10-15) interacts with ATP; it reads GAGKGT. The segment at 30-59 is NMP; that stretch reads STGDMFRDHKARGTEIGKQVQAIMDAGGLV. AMP-binding positions include Thr31, Arg36, 57 to 59, 85 to 88, and Gln92; these read GLV and GYPR. An LID region spans residues 126–163; sequence GRRSCPRCGAVYHVSQNPPHRAGFCDRDDAALVQREDD. Arg127 serves as a coordination point for ATP. Cys130 and Cys133 together coordinate Zn(2+). 136–137 serves as a coordination point for ATP; it reads VY. Zn(2+)-binding residues include Cys150 and Asp153. AMP-binding residues include Arg160 and Arg171. Position 199 (Gly199) interacts with ATP.

The protein belongs to the adenylate kinase family. Monomer.

Its subcellular location is the cytoplasm. It carries out the reaction AMP + ATP = 2 ADP. The protein operates within purine metabolism; AMP biosynthesis via salvage pathway; AMP from ADP: step 1/1. Functionally, catalyzes the reversible transfer of the terminal phosphate group between ATP and AMP. Plays an important role in cellular energy homeostasis and in adenine nucleotide metabolism. The protein is Adenylate kinase of Anaeromyxobacter dehalogenans (strain 2CP-1 / ATCC BAA-258).